The sequence spans 794 residues: uncharacterized protein (794 aa).

Positions 1–22 (MKFKYGAIVFSGLLGVSAILAA) are cleaved as a signal peptide. Residue Cys23 is the site of N-palmitoyl cysteine attachment. Residue Cys23 is the site of S-diacylglycerol cysteine attachment. Polar residues-rich tracts occupy residues 182–200 (TSVQRTADSGSGTTNNNGV) and 245–261 (QMSTQTQPTDNSNDANQ). Disordered stretches follow at residues 182–208 (TSVQRTADSGSGTTNNNGVTKPLKIDK), 222–261 (NKAKENGKKTSSSRRKRNLSSSKQMSTQTQPTDNSNDANQ), 474–529 (FKIK…GKNG), 566–594 (SAAKKEDKKSGESTTEQTQIQSKSVTEQK), and 737–757 (KNEKKEGSDQKDSKSNGRGKQ). Residues 475-501 (KIKSSNKSKSSSSKSSTKAETGKTSGG) show a composition bias toward low complexity. The segment covering 511-526 (GAQNQGKKGEGAQNQG) has biased composition (polar residues). Positions 567-576 (AAKKEDKKSG) are enriched in basic and acidic residues. Residues 577–593 (ESTTEQTQIQSKSVTEQ) show a composition bias toward polar residues. A compositionally biased stretch (basic and acidic residues) spans 737–751 (KNEKKEGSDQKDSKS).

Belongs to the MG185/MG260 family.

It localises to the cell membrane. This is an uncharacterized protein from Mycoplasma pneumoniae (strain ATCC 29342 / M129 / Subtype 1) (Mycoplasmoides pneumoniae).